Consider the following 466-residue polypeptide: MNTNKVKIKAEYLTKKFELLPAKSSKNKAKSLIGSNSKNEKDFWALRNISFEIRDGECVGVIGLNGAGKSTLSNIISGQIAQTTGRVEINGDVSIIAASAGMQNNLSGRENIRLKALMVGLTNKEIKSKMDDIIEFSELGPFIDQPVKTYSSGMKAKLGFSIMVHQNPDIMIIDEGLSVGDKTFVDKSQKKMFEFRDEGKTILLVSHDMRTIKEWCDRVIWLNYGEVKAYGRPEEVIPEYEKFVQWFKKLPKKEQEKFKTDQRQAQLDYSVEELKAEIVSQNPSKSRRVQREVTEELKNKKDNHKLSLMSKVIVWLCLLAFIWITLVSLSNATLAESLRHPKTFFTERLFKSDTRNMTSTTKKEAVVKTSSSPKKKVSQAKKTTKVSSTQKNTSSSSSTSNQNTYIVQAGDSLSIIAENHGYSVEEIQQVNPGVDFSVIHPGQEINLPEPTTSANSTTEQSDGANQ.

In terms of domain architecture, ABC transporter spans 27 to 249 (NKAKSLIGSN…YEKFVQWFKK (223 aa)). 63-70 (GLNGAGKS) is a binding site for ATP. The tract at residues 250–466 (LPKKEQEKFK…TTEQSDGANQ (217 aa)) is unknown. Disordered stretches follow at residues 356 to 403 (NMTS…SNQN) and 439 to 466 (IHPG…GANQ). Residues 373-384 (PKKKVSQAKKTT) show a composition bias toward basic residues. Low complexity predominate over residues 385 to 403 (KVSSTQKNTSSSSSTSNQN). In terms of domain architecture, LysM spans 403–447 (NTYIVQAGDSLSIIAENHGYSVEEIQQVNPGVDFSVIHPGQEINL). The span at 449–466 (EPTTSANSTTEQSDGANQ) shows a compositional bias: polar residues.

Belongs to the ABC transporter superfamily. Teichoic acids exporter (TC 3.A.1.104.1) family. The complex is composed of two ATP-binding proteins (TagH) and two transmembrane proteins (TagG).

Its subcellular location is the cell membrane. It catalyses the reaction ATP + H2O + teichoic acidSide 1 = ADP + phosphate + teichoic acidSide 2.. Its function is as follows. Part of the ABC transporter complex TagGH involved in teichoic acids export. Responsible for energy coupling to the transport system. This is Teichoic acids export ATP-binding protein TagH from Lactococcus lactis subsp. lactis (strain IL1403) (Streptococcus lactis).